The sequence spans 432 residues: Argininosuccinate lyase (432 aa).

Belongs to the lyase 1 family. Argininosuccinate lyase subfamily.

It is found in the cytoplasm. The catalysed reaction is 2-(N(omega)-L-arginino)succinate = fumarate + L-arginine. It participates in amino-acid biosynthesis; L-arginine biosynthesis; L-arginine from L-ornithine and carbamoyl phosphate: step 3/3. This Xanthomonas axonopodis pv. citri (strain 306) protein is Argininosuccinate lyase.